We begin with the raw amino-acid sequence, 84 residues long: uncharacterized protein (84 aa).

Positions 62 to 84 (GYATKKDTMRMSAQKRTTKRLKP) are disordered.

This is an uncharacterized protein from Soybean chlorotic mottle virus.